The following is a 321-amino-acid chain: Phospho-N-acetylmuramoyl-pentapeptide-transferase (321 aa).

A run of 10 helical transmembrane segments spans residues 6–26 (ALIP…LFIG), 50–70 (GTPT…GIWV), 82–102 (LFIL…DDFI), 118–138 (LLGQ…EGYP), 143–163 (FFGI…FWLV), 175–195 (IDGL…IIAW), 200–220 (YDVL…FAYN), 226–246 (IFMG…ISIM), 251–271 (WTLL…MLQV), and 301–321 (IDII…WFIW).

Belongs to the glycosyltransferase 4 family. MraY subfamily. Mg(2+) serves as cofactor.

It is found in the cell membrane. The catalysed reaction is UDP-N-acetyl-alpha-D-muramoyl-L-alanyl-gamma-D-glutamyl-L-lysyl-D-alanyl-D-alanine + di-trans,octa-cis-undecaprenyl phosphate = Mur2Ac(oyl-L-Ala-gamma-D-Glu-L-Lys-D-Ala-D-Ala)-di-trans,octa-cis-undecaprenyl diphosphate + UMP. Its pathway is cell wall biogenesis; peptidoglycan biosynthesis. Functionally, catalyzes the initial step of the lipid cycle reactions in the biosynthesis of the cell wall peptidoglycan: transfers peptidoglycan precursor phospho-MurNAc-pentapeptide from UDP-MurNAc-pentapeptide onto the lipid carrier undecaprenyl phosphate, yielding undecaprenyl-pyrophosphoryl-MurNAc-pentapeptide, known as lipid I. The polypeptide is Phospho-N-acetylmuramoyl-pentapeptide-transferase (Enterococcus hirae).